Here is a 304-residue protein sequence, read N- to C-terminus: Putative S-adenosyl-L-methionine-dependent methyltransferase MSMEG_1481/MSMEI_1445 (304 aa).

S-adenosyl-L-methionine contacts are provided by residues D127 and 156 to 157; that span reads DL.

This sequence belongs to the UPF0677 family.

Functionally, exhibits S-adenosyl-L-methionine-dependent methyltransferase activity. The chain is Putative S-adenosyl-L-methionine-dependent methyltransferase MSMEG_1481/MSMEI_1445 from Mycolicibacterium smegmatis (strain ATCC 700084 / mc(2)155) (Mycobacterium smegmatis).